A 209-amino-acid chain; its full sequence is Probable GTP-binding protein EngB (209 aa).

The 177-residue stretch at 22 to 198 (TPLEIAFVGR…NRTVGSWFDA (177 aa)) folds into the EngB-type G domain. 2 residues coordinate Mg(2+): serine 37 and threonine 59.

This sequence belongs to the TRAFAC class TrmE-Era-EngA-EngB-Septin-like GTPase superfamily. EngB GTPase family. Requires Mg(2+) as cofactor.

Its function is as follows. Necessary for normal cell division and for the maintenance of normal septation. This Neisseria meningitidis serogroup C (strain 053442) protein is Probable GTP-binding protein EngB.